The sequence spans 851 residues: MNYVGQLAETVFGTVKELYRGLNPATLSGGIDVLVVKQVDGSFRCSPFHVRFGKLGVLRSREKVVDIELNGEPVDLHMKLGDSGEAFFVQELESDDEHVPPGLCTSPIPWGGLSGFPSDSQLGTASEPEGLVMAGTASTGRRKRRRRRKPKQKEDAVATDSSPEELEAGAESELSLPEKLRPEPPGVQLEEKSSLQPKDIYPYSDGEWPPQASLSAGELTSPKSDSELEVRTPEPSPLRAESHMQWAWGRLPKVARAERPESSVVLEGRAGATSPPRGGPSTPSTSVAGGVDPLGLPIQQTEAGADLQPDTEDPTLVGPPLHTPETEESKTQSSGDMGLPPASKSWSWATLEVPVPTGQPERVSRGKGSPKRSQHLGPSDIYLDDLPSLDSENAALYFPQSDSGLGARRWSEPSSQKSLRDPNPEHEPEPTLDTVDTIALSLCGGLADSRDISLEKFNQHSVSYQDLTKNPGLLDDPNLVVKINGKHYNWAVAAPMILSLQAFQKNLPKSTMDKLEREKMPRKGGRWWFSWRRRDFLAEERSAQKEKTAAKEQQGEKTEVLSSDDDAPDSPVILEIPSLPPSTPPSTPTYKKSLRLSSDQIRRLNLQEGANDVVFSVTTQYQGTCRCKATIYLWKWDDKVVISDIDGTITKSDALGHILPQLGKDWTHQGITSLYHKIQLNGYKFLYCSARAIGMADLTKGYLQWVSEGGCSLPKGPILLSPSSLFSALHREVIEKKPEVFKVACLSDIQQLFLPHGQPFYAAFGNRPNDVFAYRQVGLPESRIFTVNPRGELIQELIKNHKSTYERLGEVVELLFPPVARGPSTDLANPEYSNFCYWREPLPAVDLDTLD.

Positions 1 to 108 (MNYVGQLAET…VPPGLCTSPI (108 aa)) are N-LIP. 2 disordered regions span residues 114–385 (SGFP…YLDD) and 400–432 (QSDSGLGARRWSEPSSQKSLRDPNPEHEPEPTL). Over residues 140 to 151 (GRRKRRRRRKPK) the composition is skewed to basic residues. The Nuclear localization signal signature appears at 141–148 (RRKRRRRR). Position 159 is a phosphothreonine (threonine 159). 3 positions are modified to phosphoserine: serine 161, serine 162, and serine 224. Residues 268-286 (GRAGATSPPRGGPSTPSTS) are compositionally biased toward low complexity. Positions 418-429 (SLRDPNPEHEPE) are enriched in basic and acidic residues. Serine 463 bears the Phosphoserine mark. A compositionally biased stretch (basic and acidic residues) spans 542 to 559 (SAQKEKTAAKEQQGEKTE). The tract at residues 542 to 591 (SAQKEKTAAKEQQGEKTEVLSSDDDAPDSPVILEIPSLPPSTPPSTPTYK) is disordered. Pro residues predominate over residues 578-587 (SLPPSTPPST). A C-LIP region spans residues 590 to 792 (YKKSLRLSSD…RIFTVNPRGE (203 aa)). The DXDXT motif signature appears at 644–648 (DIDGT). Residues 655 to 659 (LGHIL) carry the LXXIL motif motif.

It belongs to the lipin family. It depends on Mg(2+) as a cofactor. In terms of tissue distribution, significant expression in intestine and other regions of the gastrointestinal tract.

It localises to the nucleus. The catalysed reaction is a 1,2-diacyl-sn-glycero-3-phosphate + H2O = a 1,2-diacyl-sn-glycerol + phosphate. Its activity is regulated as follows. Inhibited by N-ethylmaleimide. Magnesium-dependent phosphatidate phosphatase enzyme which catalyzes the conversion of phosphatidic acid to diacylglycerol during triglyceride, phosphatidylcholine and phosphatidylethanolamine biosynthesis therefore regulates fatty acid metabolism. This Homo sapiens (Human) protein is Phosphatidate phosphatase LPIN3.